The sequence spans 539 residues: Laccase-1 (539 aa).

Residues 1–21 (MAFTAISLFLAALGVINTAFA) form the signal peptide. 2 consecutive Plastocyanin-like domains span residues 37-154 (AEVN…YDPE) and 166-309 (ESTV…HYLG). A glycan (N-linked (GlcNAc...) asparagine) is linked at asparagine 78. Positions 88 and 90 each coordinate Cu cation. 2 disulfides stabilise this stretch: cysteine 109/cysteine 513 and cysteine 141/cysteine 228. An N-linked (GlcNAc...) asparagine glycan is attached at asparagine 120. The Cu cation site is built by histidine 133 and histidine 135. Asparagine 202, asparagine 233, asparagine 240, asparagine 293, asparagine 318, asparagine 353, asparagine 385, and asparagine 405 each carry an N-linked (GlcNAc...) asparagine glycan. The Plastocyanin-like 3 domain occupies 374–495 (SPTVPVLLQI…GFAVVMAEDP (122 aa)). Cu cation-binding residues include histidine 421, histidine 424, and histidine 426. A glycan (N-linked (GlcNAc...) asparagine) is linked at asparagine 457. Positions 476, 477, 478, and 482 each coordinate Cu cation. An N-linked (GlcNAc...) asparagine glycan is attached at asparagine 532.

This sequence belongs to the multicopper oxidase family. Cu cation serves as cofactor.

The protein resides in the secreted. The enzyme catalyses 4 hydroquinone + O2 = 4 benzosemiquinone + 2 H2O. Inhibited by chloride ions. Inhibited by citrate. Inhibited by oxalate. Activated by acetate. In terms of biological role, in vitro, has activity towards 2,2'-azino-bis(3-ethylbenzthiazoline-6-sulfonic acid) (ABTS), 2,6-dimethoxy-phenol, and guaiacol. Although brown rot fungi preferentially degrade hemicellulose and cellulose, the enzyme may contribute to generating small amounts of lignin breakdown products required for catalytic reactions. The chain is Laccase-1 from Fomitopsis schrenkii (Brown rot fungus).